Here is a 524-residue protein sequence, read N- to C-terminus: Probable myosin-binding protein 5 (524 aa).

Residues 20 to 40 (FLIYALLEWILIIILFIDGFL) traverse the membrane as a helical segment. Residues 299 to 397 (SILQHLNRQV…ELEAGIEVYR (99 aa)) form the GTD-binding domain. Residues 462–490 (SRKDMLVKEISEITERLNAIESKGELLQQ) adopt a coiled-coil conformation.

It is found in the membrane. Probable membrane-anchored myosin receptors. The protein is Probable myosin-binding protein 5 of Arabidopsis thaliana (Mouse-ear cress).